The sequence spans 197 residues: ATP-dependent Clp protease proteolytic subunit 2 (197 aa).

The Nucleophile role is filled by serine 97. Histidine 122 is a catalytic residue.

It belongs to the peptidase S14 family. As to quaternary structure, fourteen ClpP subunits assemble into 2 heptameric rings which stack back to back to give a disk-like structure with a central cavity, resembling the structure of eukaryotic proteasomes.

Its subcellular location is the cytoplasm. It catalyses the reaction Hydrolysis of proteins to small peptides in the presence of ATP and magnesium. alpha-casein is the usual test substrate. In the absence of ATP, only oligopeptides shorter than five residues are hydrolyzed (such as succinyl-Leu-Tyr-|-NHMec, and Leu-Tyr-Leu-|-Tyr-Trp, in which cleavage of the -Tyr-|-Leu- and -Tyr-|-Trp bonds also occurs).. In terms of biological role, cleaves peptides in various proteins in a process that requires ATP hydrolysis. Has a chymotrypsin-like activity. Plays a major role in the degradation of misfolded proteins. The polypeptide is ATP-dependent Clp protease proteolytic subunit 2 (Leptospira interrogans serogroup Icterohaemorrhagiae serovar copenhageni (strain Fiocruz L1-130)).